A 78-amino-acid polypeptide reads, in one-letter code: Small ribosomal subunit protein bS18 (78 aa).

The protein belongs to the bacterial ribosomal protein bS18 family. Part of the 30S ribosomal subunit. Forms a tight heterodimer with protein bS6.

Its function is as follows. Binds as a heterodimer with protein bS6 to the central domain of the 16S rRNA, where it helps stabilize the platform of the 30S subunit. The protein is Small ribosomal subunit protein bS18 of Frankia casuarinae (strain DSM 45818 / CECT 9043 / HFP020203 / CcI3).